We begin with the raw amino-acid sequence, 268 residues long: Exodeoxyribonuclease III (268 aa).

Residue Glu-34 coordinates Mg(2+). Tyr-109 is a catalytic residue. Asp-151, Asn-153, and Asp-258 together coordinate Mg(2+). Asp-151 functions as the Proton donor/acceptor in the catalytic mechanism.

Belongs to the DNA repair enzymes AP/ExoA family. In terms of assembly, monomer. Requires Mg(2+) as cofactor. It depends on Mn(2+) as a cofactor.

It carries out the reaction Exonucleolytic cleavage in the 3'- to 5'-direction to yield nucleoside 5'-phosphates.. In terms of biological role, major apurinic-apyrimidinic endonuclease of E.coli. It removes the damaged DNA at cytosines and guanines by cleaving on the 3'-side of the AP site by a beta-elimination reaction. It exhibits 3'-5'-exonuclease, 3'-phosphomonoesterase, 3'-repair diesterase and ribonuclease H activities. This is Exodeoxyribonuclease III (xthA) from Salmonella typhi.